A 265-amino-acid chain; its full sequence is UDP-N-acetylenolpyruvoylglucosamine reductase (265 aa).

The FAD-binding PCMH-type domain occupies 15–169; the sequence is GVGGPAELWT…TRVRLKLKER (155 aa). R149 is a catalytic residue. The tract at residues 182-203 is disordered; it reads DRARKGQPKRKSAGCAFKNPPG. The Proton donor role is filled by C196.

This sequence belongs to the MurB family. The cofactor is FAD.

It is found in the cytoplasm. It catalyses the reaction UDP-N-acetyl-alpha-D-muramate + NADP(+) = UDP-N-acetyl-3-O-(1-carboxyvinyl)-alpha-D-glucosamine + NADPH + H(+). Its pathway is cell wall biogenesis; peptidoglycan biosynthesis. Functionally, cell wall formation. The polypeptide is UDP-N-acetylenolpyruvoylglucosamine reductase (Thermus thermophilus (strain ATCC BAA-163 / DSM 7039 / HB27)).